We begin with the raw amino-acid sequence, 167 residues long: MSTLLWLLSFMLHGVLLYAVIILYTRLAAVKETEKQQKQILEETENTLAAFLLELKEENEKLIENKASSASQSDEESQKSGLQTSETYQERDPVQEAENLPEHIEGLITEVDRREELVNSEVQSFEDQVIELYEQGYSASQIAQKMKSGKTEIELFLKFRSKGVKDS.

Residues 63-105 form a disordered region; that stretch reads IENKASSASQSDEESQKSGLQTSETYQERDPVQEAENLPEHIE. A compositionally biased stretch (basic and acidic residues) spans 88–105; sequence YQERDPVQEAENLPEHIE.

Required for swarming motility and for maximal sigma-D activity. This Bacillus subtilis (strain 168) protein is Swarming motility protein SwrB (swrB).